Consider the following 429-residue polypeptide: Phosphomethylpyrimidine synthase (429 aa).

Substrate is bound by residues N66, M95, Y124, H163, 185-187, 226-229, and E265; these read SRG and DGLR. Zn(2+) is bound at residue H269. Y292 provides a ligand contact to substrate. H333 lines the Zn(2+) pocket. [4Fe-4S] cluster is bound by residues C407, C410, and C414.

This sequence belongs to the ThiC family. [4Fe-4S] cluster is required as a cofactor.

It catalyses the reaction 5-amino-1-(5-phospho-beta-D-ribosyl)imidazole + S-adenosyl-L-methionine = 4-amino-2-methyl-5-(phosphooxymethyl)pyrimidine + CO + 5'-deoxyadenosine + formate + L-methionine + 3 H(+). Its pathway is cofactor biosynthesis; thiamine diphosphate biosynthesis. Functionally, catalyzes the synthesis of the hydroxymethylpyrimidine phosphate (HMP-P) moiety of thiamine from aminoimidazole ribotide (AIR) in a radical S-adenosyl-L-methionine (SAM)-dependent reaction. The chain is Phosphomethylpyrimidine synthase from Pyrococcus furiosus (strain ATCC 43587 / DSM 3638 / JCM 8422 / Vc1).